Here is a 217-residue protein sequence, read N- to C-terminus: MOB kinase activator 3A (217 aa).

Cys-83, Cys-88, His-165, and His-170 together coordinate Zn(2+).

The protein belongs to the MOB1/phocein family.

Functionally, may regulate the activity of kinases. The sequence is that of MOB kinase activator 3A (MOB3A) from Pongo abelii (Sumatran orangutan).